Consider the following 65-residue polypeptide: Photosystem II reaction center protein Z (65 aa).

The next 2 membrane-spanning stretches (helical) occupy residues 11–31 (LVLA…VIFA) and 44–64 (WLAC…DGIF).

It belongs to the PsbZ family. PSII is composed of 1 copy each of membrane proteins PsbA, PsbB, PsbC, PsbD, PsbE, PsbF, PsbH, PsbI, PsbJ, PsbK, PsbL, PsbM, PsbT, PsbY, PsbZ, Psb30/Ycf12, at least 3 peripheral proteins of the oxygen-evolving complex and a large number of cofactors. It forms dimeric complexes.

The protein localises to the plastid. Its subcellular location is the chloroplast thylakoid membrane. Functionally, may control the interaction of photosystem II (PSII) cores with the light-harvesting antenna, regulates electron flow through the 2 photosystem reaction centers. PSII is a light-driven water plastoquinone oxidoreductase, using light energy to abstract electrons from H(2)O, generating a proton gradient subsequently used for ATP formation. The chain is Photosystem II reaction center protein Z from Euglena gracilis.